The following is an 81-amino-acid chain: Neuronatin (81 aa).

The protein belongs to the neuronatin family.

May participate in the maintenance of segment identity in the hindbrain and pituitary development, and maturation or maintenance of the overall structure of the nervous system. May function as a regulatory subunit of ion channels. The chain is Neuronatin (NNAT) from Mesocricetus auratus (Golden hamster).